Reading from the N-terminus, the 513-residue chain is 2-isopropylmalate synthase (513 aa).

The Pyruvate carboxyltransferase domain maps to 5 to 268; sequence LIIFDTTLRD…DVGVDTTQIV (264 aa). Mn(2+)-binding residues include D14, H202, H204, and N239. The regulatory domain stretch occupies residues 394–513; that stretch reads RFVSLSQRSE…KSSEKLNPQI (120 aa).

The protein belongs to the alpha-IPM synthase/homocitrate synthase family. LeuA type 1 subfamily. As to quaternary structure, homodimer. Mn(2+) serves as cofactor.

It is found in the cytoplasm. It catalyses the reaction 3-methyl-2-oxobutanoate + acetyl-CoA + H2O = (2S)-2-isopropylmalate + CoA + H(+). It participates in amino-acid biosynthesis; L-leucine biosynthesis; L-leucine from 3-methyl-2-oxobutanoate: step 1/4. Catalyzes the condensation of the acetyl group of acetyl-CoA with 3-methyl-2-oxobutanoate (2-ketoisovalerate) to form 3-carboxy-3-hydroxy-4-methylpentanoate (2-isopropylmalate). This is 2-isopropylmalate synthase from Ralstonia nicotianae (strain ATCC BAA-1114 / GMI1000) (Ralstonia solanacearum).